Here is a 75-residue protein sequence, read N- to C-terminus: Meucin-49 (75 aa).

Positions 1-22 are cleaved as a signal peptide; it reads MNKKILLVIFIVTMLIVDEVNS.

Belongs to the non-disulfide-bridged peptide (NDBP) superfamily. Long chain multifunctional peptide (group 2) family. In terms of tissue distribution, expressed by the venom gland.

The protein localises to the secreted. Functionally, insecticidal toxin and antimicrobial peptide with potent activity against both Gram-negative and -positive bacteria, as well as against fungi. Acts by disrupting bacterial membrane integrity. Shows broad-spectrum and highly potent bactericidal activities against the Gram-positive bacteria B.cereus, B.megaterium, B.subtilis, M.luteus, S.aureus, S.epidermidis, S.warneri, S.griseus, S.scabiei, S.mutans, S.salivarius, and S.sanguinis. Also exhibits a wide spectrum of activity against the Gram-negative bacteria A.faecalis, E.coli, P.aeruginosa, P.solanacearum, S.enterica, S.marcescens, and S.maltophilia. Also shows antimicrobial activities against the fungal strains Aspergillus flavus, A.fumigatus, A.nidulans, A.niger, Beauveria bassiana, and Saccharomyces cerevisiae. Its antibiotic activity is potentiated by other antibacterial peptides such as MeuNaTxbeta-4. Also induces cytolysis on mice, lizards and birds erythrocytes. This Mesobuthus eupeus (Lesser Asian scorpion) protein is Meucin-49.